The primary structure comprises 300 residues: Protoheme IX farnesyltransferase 1 (300 aa).

9 helical membrane-spanning segments follow: residues 28-48 (VVAL…PTIL), 54-74 (VAGL…NHLI), 100-120 (ALLF…VFTN), 122-142 (LTAW…TAYL), 149-169 (NIVI…TAVT), 176-196 (ALLL…ALAI), 222-242 (CILL…LVGM), 243-263 (SGPL…YKAW), and 280-300 (FSIY…YLWA).

The protein belongs to the UbiA prenyltransferase family. Protoheme IX farnesyltransferase subfamily.

The protein localises to the cell inner membrane. It carries out the reaction heme b + (2E,6E)-farnesyl diphosphate + H2O = Fe(II)-heme o + diphosphate. Its pathway is porphyrin-containing compound metabolism; heme O biosynthesis; heme O from protoheme: step 1/1. Converts heme B (protoheme IX) to heme O by substitution of the vinyl group on carbon 2 of heme B porphyrin ring with a hydroxyethyl farnesyl side group. In Shewanella sp. (strain ANA-3), this protein is Protoheme IX farnesyltransferase 1.